A 272-amino-acid chain; its full sequence is Eukaryotic translation initiation factor 4E homolog (272 aa).

A disordered region spans residues 249–272; that stretch reads GKLNSGRKPSNTRGGFSSFGNKRY. Over residues 255 to 272 the composition is skewed to polar residues; sequence RKPSNTRGGFSSFGNKRY.

This sequence belongs to the eukaryotic initiation factor 4E family.

Recognizes and binds the 7-methylguanosine-containing mRNA cap during an early step in the initiation of protein synthesis and facilitates ribosome binding by inducing the unwinding of the mRNAs secondary structures. This is Eukaryotic translation initiation factor 4E homolog from Acanthamoeba polyphaga mimivirus (APMV).